Here is a 185-residue protein sequence, read N- to C-terminus: Hypoxanthine/guanine phosphoribosyltransferase (185 aa).

It belongs to the purine/pyrimidine phosphoribosyltransferase family. Archaeal HPRT subfamily. As to quaternary structure, homodimer.

It localises to the cytoplasm. The enzyme catalyses IMP + diphosphate = hypoxanthine + 5-phospho-alpha-D-ribose 1-diphosphate. It catalyses the reaction GMP + diphosphate = guanine + 5-phospho-alpha-D-ribose 1-diphosphate. The protein operates within purine metabolism; IMP biosynthesis via salvage pathway; IMP from hypoxanthine: step 1/1. In terms of biological role, catalyzes a salvage reaction resulting in the formation of IMP that is energically less costly than de novo synthesis. The polypeptide is Hypoxanthine/guanine phosphoribosyltransferase (Methanococcus vannielii (strain ATCC 35089 / DSM 1224 / JCM 13029 / OCM 148 / SB)).